We begin with the raw amino-acid sequence, 444 residues long: Phosphoglucosamine mutase (444 aa).

Ser104 serves as the catalytic Phosphoserine intermediate. The Mg(2+) site is built by Ser104, Asp243, Asp245, and Asp247. Residue Ser104 is modified to Phosphoserine.

Belongs to the phosphohexose mutase family. Requires Mg(2+) as cofactor. Activated by phosphorylation.

The enzyme catalyses alpha-D-glucosamine 1-phosphate = D-glucosamine 6-phosphate. Functionally, catalyzes the conversion of glucosamine-6-phosphate to glucosamine-1-phosphate. This is Phosphoglucosamine mutase from Neisseria gonorrhoeae (strain ATCC 700825 / FA 1090).